Reading from the N-terminus, the 477-residue chain is Glycogen synthase (477 aa).

Residue Lys15 participates in ADP-alpha-D-glucose binding.

It belongs to the glycosyltransferase 1 family. Bacterial/plant glycogen synthase subfamily.

The catalysed reaction is [(1-&gt;4)-alpha-D-glucosyl](n) + ADP-alpha-D-glucose = [(1-&gt;4)-alpha-D-glucosyl](n+1) + ADP + H(+). It participates in glycan biosynthesis; glycogen biosynthesis. Functionally, synthesizes alpha-1,4-glucan chains using ADP-glucose. The protein is Glycogen synthase of Glaesserella parasuis serovar 5 (strain SH0165) (Haemophilus parasuis).